Reading from the N-terminus, the 132-residue chain is SH2 domain-containing protein 1B2 (132 aa).

The SH2 domain occupies 5–101; that stretch reads YYHGCLTKRE…GMVVHLSNPI (97 aa).

As to quaternary structure, interacts with SLAMF1 (phosphorylated). Interacts with CD244. Interacts with Src kinases HCK, LYN, FYN, FGR and LCK (via kinase domains). As to expression, expressed in spleen. Expressed in macrophages, CD8(+) T-Cells and NK cells. Conflictingly found only in NK cells.

It localises to the cytoplasm. Functionally, cytoplasmic adapter regulating receptors of the signaling lymphocytic activation molecule (SLAM) family. In SLAM signaling may cooperate with Sh2d1a/SAP. Plays a role in regulation of effector functions of natural killer (NK) cells by controlling signal transduction through Cd244/2b4. However, conflicting results are reported which may reflect the use of different strain backgrounds. Proposed to act as an inhibitor of Cd244-mediated NK cell function including cytotoxicity and IFN-gamma production, the latter found also by triggering Klra4 and Klrk1 next to Cd244. Seems to positively regulate Cd244- and Cd84-dependent NK cell functions implicating Cd244-mediated phosphorylation of Vav1. The sequence is that of SH2 domain-containing protein 1B2 (Sh2d1b2) from Mus musculus (Mouse).